Consider the following 41-residue polypeptide: Photosystem II reaction center protein L (41 aa).

Residues S20–F40 form a helical membrane-spanning segment.

Belongs to the PsbL family. PSII is composed of 1 copy each of membrane proteins PsbA, PsbB, PsbC, PsbD, PsbE, PsbF, PsbH, PsbI, PsbJ, PsbK, PsbL, PsbM, PsbT, PsbX, PsbY, PsbZ, Psb30/Ycf12, peripheral proteins PsbO, CyanoQ (PsbQ), PsbU, PsbV and a large number of cofactors. It forms dimeric complexes.

The protein resides in the cellular thylakoid membrane. Its function is as follows. One of the components of the core complex of photosystem II (PSII). PSII is a light-driven water:plastoquinone oxidoreductase that uses light energy to abstract electrons from H(2)O, generating O(2) and a proton gradient subsequently used for ATP formation. It consists of a core antenna complex that captures photons, and an electron transfer chain that converts photonic excitation into a charge separation. This subunit is found at the monomer-monomer interface and is required for correct PSII assembly and/or dimerization. The protein is Photosystem II reaction center protein L of Trichodesmium erythraeum (strain IMS101).